Consider the following 88-residue polypeptide: Small ribosomal subunit protein eS21 (88 aa).

It belongs to the eukaryotic ribosomal protein eS21 family. In terms of assembly, component of the small ribosomal subunit. Mature ribosomes consist of a small (40S) and a large (60S) subunit. The 40S subunit contains about 33 different proteins and 1 molecule of RNA (18S). The 60S subunit contains about 49 different proteins and 3 molecules of RNA (25S, 5.8S and 5S).

The protein resides in the cytoplasm. Required for the processing of the 20S rRNA-precursor to mature 18S rRNA in a late step of the maturation of 40S ribosomal subunits. Has a physiological role leading to 18S rRNA stability. This chain is Small ribosomal subunit protein eS21 (rps21), found in Aspergillus fumigatus (strain ATCC MYA-4609 / CBS 101355 / FGSC A1100 / Af293) (Neosartorya fumigata).